Consider the following 288-residue polypeptide: Diaminopimelate epimerase (288 aa).

Residues Asn13, Gln46, and Asn66 each contribute to the substrate site. The active-site Proton donor is the Cys75. Substrate is bound by residues 76-77 (GN), Asn166, Asn199, and 217-218 (ER). Residue Cys226 is the Proton acceptor of the active site. Position 227-228 (227-228 (GT)) interacts with substrate.

The protein belongs to the diaminopimelate epimerase family. As to quaternary structure, homodimer.

The protein localises to the cytoplasm. The enzyme catalyses (2S,6S)-2,6-diaminopimelate = meso-2,6-diaminopimelate. The protein operates within amino-acid biosynthesis; L-lysine biosynthesis via DAP pathway; DL-2,6-diaminopimelate from LL-2,6-diaminopimelate: step 1/1. Catalyzes the stereoinversion of LL-2,6-diaminopimelate (L,L-DAP) to meso-diaminopimelate (meso-DAP), a precursor of L-lysine and an essential component of the bacterial peptidoglycan. This is Diaminopimelate epimerase from Cupriavidus necator (strain ATCC 17699 / DSM 428 / KCTC 22496 / NCIMB 10442 / H16 / Stanier 337) (Ralstonia eutropha).